We begin with the raw amino-acid sequence, 1042 residues long: Diacylglycerol lipase-alpha (1042 aa).

Residues 1-22 (MPGIVVFRRRWSVGSDDLVLPA) are Cytoplasmic-facing. Residues 23-43 (IFLFLLHTTWFVILSVVLFGL) form a helical membrane-spanning segment. Over 44-60 (VYNPHEACSLNLVDHGR) the chain is Extracellular. The helical transmembrane segment at 61–81 (GYLGILLSCMIAEMAIIWLSM) threads the bilayer. The Cytoplasmic portion of the chain corresponds to 82–101 (RGGILYTEPRDSMQYVLYVR). The chain crosses the membrane as a helical span at residues 102-122 (LAILVIEFIYAIVGIVWLTQY). Residues 123 to 136 (YTSCNDLTAKNVTL) lie on the Extracellular side of the membrane. N-linked (GlcNAc...) asparagine glycosylation is present at asparagine 133. A helical membrane pass occupies residues 137-157 (GMVVCNWVVILSVCITVLCVF). Residues 158-1042 (DPTGRTFVKL…KQDELVISAR (885 aa)) are Cytoplasmic-facing. Catalysis depends on charge relay system residues serine 472 and aspartate 524. A phosphoserine mark is found at serine 727, serine 729, serine 732, serine 743, serine 782, serine 784, serine 806, serine 808, serine 833, serine 847, and serine 952. Positions 846-903 (LSKHSQDTQPLEAALGSGGVTPERPPSAAANDEEEEVGGGGGGPASRGELALHNGRLG) are disordered. A disordered region spans residues 1014 to 1042 (LAADKIRTSTPTGHGASPAKQDELVISAR). Phosphothreonine is present on threonine 1023.

This sequence belongs to the AB hydrolase superfamily. Lipase family. Interacts (via C-terminal) with CAMK2A; leading to the phosphorylation and inhibition of DAGLA enzymatic activity. Interacts (via PPXXF motif) with HOMER1 and HOMER2; this interaction is required for DAGLA membrane localization. Requires Ca(2+) as cofactor. Phosphorylated at Ser-782 and Ser-808 by CAMK2A; phosphorylation by CAMK2A inhibits diacylglycerol lipase activity. In terms of tissue distribution, highly expressed in brain and pancreas.

It localises to the cell membrane. The protein resides in the postsynaptic density membrane. The protein localises to the early endosome membrane. Its subcellular location is the cell projection. It is found in the dendritic spine membrane. It carries out the reaction a 1,2-diacyl-sn-glycerol + H2O = a 2-acylglycerol + a fatty acid + H(+). It catalyses the reaction 1-octadecanoyl-2-(5Z,8Z,11Z,14Z-eicosatetraenoyl)-sn-glycerol + H2O = 2-(5Z,8Z,11Z,14Z-eicosatetraenoyl)-glycerol + octadecanoate + H(+). The enzyme catalyses 1,2-di-(9Z-octadecenoyl)-sn-glycerol + H2O = 2-(9Z-octadecenoyl)-glycerol + (9Z)-octadecenoate + H(+). The catalysed reaction is 1-(9Z-octadecenoyl)-2-(5Z,8Z,11Z,14Z-eicosatetraenoyl)-sn-glycerol + H2O = 2-(5Z,8Z,11Z,14Z-eicosatetraenoyl)-glycerol + (9Z)-octadecenoate + H(+). It carries out the reaction 1-(9Z-octadecenoyl)-2-octadecanoyl-sn-glycerol + H2O = 2-octadecanoylglycerol + (9Z)-octadecenoate + H(+). It catalyses the reaction 1-(9Z-octadecenoyl)-2-(9Z,12Z-octadecadienoyl)-sn-glycerol + H2O = 2-(9Z,12Z-octadecadienoyl)-glycerol + (9Z)-octadecenoate + H(+). The enzyme catalyses 1-(9Z-octadecenoyl)-2-O-(5Z,8Z,11Z,14Z-eicosatetraenyl)-sn-glycerol + H2O = 2-O-(5Z,8Z,11Z,14Z)-eicosatetraenylglycerol + (9Z)-octadecenoate + H(+). Its activity is regulated as follows. Inhibited by 1,2,3-triazole urea covalent inhibitors KT172, DH376 and DO34. Inhibited by p-hydroxy-mercuri-benzoate and HgCl(2), but not to PMSF. Also inhibited by RHC80267. Diacylglycerol lipase activity is inhibited by the phosphorylation of Ser-782 and Ser-808 by CAMK2A. In terms of biological role, serine hydrolase that hydrolyzes arachidonic acid-esterified diacylglycerols (DAGs) to produce the principal endocannabinoid, 2-arachidonoylglycerol (2-AG). Preferentially hydrolyzes sn-1 fatty acids from diacylglycerols (DAG) that contain arachidonic acid (AA) esterified at the sn-2 position to biosynthesize 2-AG. Has negligible activity against other lipids including monoacylglycerols and phospholipids. Plays a key role in regulating 2-AG signaling in the central nervous system (CNS). Regulates 2-AG involved in retrograde suppression at central synapses. Supports axonal growth during development and adult neurogenesis. Plays a role for eCB signaling in the physiological regulation of anxiety and depressive behaviors. Also regulates neuroinflammatory responses in the brain, in particular, LPS-induced microglial activation. The chain is Diacylglycerol lipase-alpha (DAGLA) from Homo sapiens (Human).